The primary structure comprises 90 residues: UPF0237 protein MMP0657 (90 aa).

The ACT domain maps to 5 to 79; it reads VITVVGVDKP…SEIGVKINVQ (75 aa).

It belongs to the UPF0237 family.

This chain is UPF0237 protein MMP0657, found in Methanococcus maripaludis (strain DSM 14266 / JCM 13030 / NBRC 101832 / S2 / LL).